A 137-amino-acid polypeptide reads, in one-letter code: Large-conductance mechanosensitive channel (137 aa).

Transmembrane regions (helical) follow at residues 15-35 (VDLA…TSLV) and 81-101 (GKFI…FFVI).

Belongs to the MscL family. As to quaternary structure, homopentamer.

The protein resides in the cell inner membrane. Its function is as follows. Channel that opens in response to stretch forces in the membrane lipid bilayer. May participate in the regulation of osmotic pressure changes within the cell. The polypeptide is Large-conductance mechanosensitive channel (Hyphomonas neptunium (strain ATCC 15444)).